A 165-amino-acid chain; its full sequence is Ribosome maturation factor RimM (165 aa).

The PRC barrel domain maps to 90–161 (EDEYFIVDLV…LITIRPSGEW (72 aa)).

Belongs to the RimM family. Binds ribosomal protein uS19.

It is found in the cytoplasm. In terms of biological role, an accessory protein needed during the final step in the assembly of 30S ribosomal subunit, possibly for assembly of the head region. Essential for efficient processing of 16S rRNA. May be needed both before and after RbfA during the maturation of 16S rRNA. It has affinity for free ribosomal 30S subunits but not for 70S ribosomes. This is Ribosome maturation factor RimM from Clostridium perfringens (strain SM101 / Type A).